A 96-amino-acid polypeptide reads, in one-letter code: Large ribosomal subunit protein bL27 (96 aa).

The propeptide occupies 1-11; that stretch reads MLKTLENLQLF. The tract at residues 13-36 is disordered; sequence HKKGGGSTSNGRDSQAKRLGAKAA.

The protein belongs to the bacterial ribosomal protein bL27 family. In terms of processing, the N-terminus is cleaved by ribosomal processing cysteine protease Prp.

The protein is Large ribosomal subunit protein bL27 of Streptococcus thermophilus (strain CNRZ 1066).